The chain runs to 406 residues: MDNIQNLCTNPLIILIGTYMSIKYYLFQIDYFNIQFGLYVTFIISLLYGSVRFNSLQQKKLMDGLIFILHVLFVLICFSIKSEIISGTLNTIFYFGFVKTIIISVVIGSFILSELDNNNHNRIIPEKMCCFCKQNIKKIMVTFVKNIDIDPIIYWSKTFFVKLYTEFKNINSVLSKNTRSEIIIDRICLKISLIKMYLYSVIVPYAISSFFGMNNDYKNIINNIDKIDYPGNLDMSFLEQEVFDSEHLDDLDDLDTPDTLNVPISTNNTDNLNSVKTNQQFNTPVAKSNTKSNRRKKTGKKIRLANQTTSSNSSNNQSPESTGTNNNVVDNKTLLRNKLREKRLARTGSLPTVPQNVDMSMINSLMQNMINNGSLEKIATEFAKNPENVADINNPKLRKLAKSMTK.

5 helical membrane passes run 7-27 (LCTNPLIILIGTYMSIKYYLF), 31-51 (YFNIQFGLYVTFIISLLYGSV), 65-85 (LIFILHVLFVLICFSIKSEII), 92-112 (IFYFGFVKTIIISVVIGSFIL), and 191-211 (ISLIKMYLYSVIVPYAISSFF). Residues 259-331 (TLNVPISTNN…TGTNNNVVDN (73 aa)) form a disordered region. Residues 262–291 (VPISTNNTDNLNSVKTNQQFNTPVAKSNTK) show a composition bias toward polar residues. The segment covering 292–303 (SNRRKKTGKKIR) has biased composition (basic residues). Low complexity predominate over residues 306–318 (NQTTSSNSSNNQS). A compositionally biased stretch (polar residues) spans 319–330 (PESTGTNNNVVD).

Its subcellular location is the membrane. This is an uncharacterized protein from Acanthamoeba polyphaga (Amoeba).